Consider the following 659-residue polypeptide: Protein NEDD1 (659 aa).

WD repeat units follow at residues 1–31 (MQEN…FNPH), 32–71 (TAPH…PVPL), 75–114 (GEGQ…VHRS), 117–156 (DHKD…SSTP), 160–200 (GSNQ…PYHN), 204–244 (THKA…LVKT), 246–285 (VADA…SPIK), and 289–332 (AHKT…SAGG). Phosphothreonine; by PLK1 is present on Thr382. Residues 383-433 (LSKEAESGKNQDFSNFDDSGKSSLGDMFSPVRDDAVVSKGGDESIGKGDGL) are disordered. Ser411 carries the phosphoserine modification. Residues 413-432 (VRDDAVVSKGGDESIGKGDG) show a composition bias toward basic and acidic residues. Phosphoserine; by PLK1 is present on Ser426. Ser468 and Ser515 each carry phosphoserine. A compositionally biased stretch (polar residues) spans 508-522 (ETGNLNASPSSNQTR). A disordered region spans residues 508 to 531 (ETGNLNASPSSNQTRSPEKFEKPE). Thr549 is subject to Phosphothreonine; by CDK1. Ser636 carries the phosphoserine; by PLK1 modification.

In terms of assembly, interacts with FAM29A. Interacts with HSPA1A and HSPA1B. Interacts with gamma-tubulin in a HSPA1A/B-dependent manner. During mitosis, prior phosphorylation on Thr-549 by CDK1 promotes subsequent phosphorylation by PLK1 on Thr-382, Ser-426 and Ser-636. Phosphorylated NEDD1 can interact with gamma-tubulin for targeting the gamma-tubulin ring complex (gTuRC) to the centrosome, an important step for spindle formation.

The protein localises to the cytoplasm. The protein resides in the cytoskeleton. It is found in the microtubule organizing center. It localises to the centrosome. Functionally, required for mitosis progression. Promotes the nucleation of microtubules from the spindle. The protein is Protein NEDD1 (NEDD1) of Bos taurus (Bovine).